The primary structure comprises 501 residues: Uridine kinase (501 aa).

Residue Ser-17 is modified to Phosphoserine. An ATP-binding site is contributed by Gly-63–Thr-70. Ser-276 bears the Phosphoserine mark.

It belongs to the uridine kinase family.

Its subcellular location is the cytoplasm. The protein resides in the nucleus. The catalysed reaction is uridine + ATP = UMP + ADP + H(+). It catalyses the reaction cytidine + ATP = CMP + ADP + H(+). The protein operates within pyrimidine metabolism; CTP biosynthesis via salvage pathway; CTP from cytidine: step 1/3. It participates in pyrimidine metabolism; UMP biosynthesis via salvage pathway; UMP from uridine: step 1/1. Catalyzes the conversion of uridine into UMP and cytidine into CMP in the pyrimidine salvage pathway. This Saccharomyces cerevisiae (strain ATCC 204508 / S288c) (Baker's yeast) protein is Uridine kinase (URK1).